The chain runs to 747 residues: Flowering time control protein FCA (747 aa).

The tract at residues 80 to 101 (YSVRPTTPPVQQPLSGQKRGYP) is disordered. RRM domains lie at 120–201 (VKLF…YADG) and 211–291 (FKLF…FAEP). Over residues 291–301 (PKRPKPGESRE) the composition is skewed to basic and acidic residues. Positions 291-503 (PKRPKPGESR…QQPLQKMQHP (213 aa)) are disordered. 2 stretches are compositionally biased toward polar residues: residues 320–353 (RPTSNFGDSSGDVSHTNPWRPATSRNVGPPSNTG) and 395–406 (SSSATLQQQNRA). Positions 448–460 (SSQLPTSQLPPQQ) are enriched in low complexity. Polar residues predominate over residues 461–498 (NISRATAPQTPLNINLRPTTVSSATVQFPPRSQQQPLQ). The region spanning 591 to 624 (GSVKCTWTEHTSPDGFKYYYNGLTGESKWEKPEE) is the WW domain. The segment covering 630-641 (REQQKQQQHQEK) has biased composition (basic and acidic residues). 2 disordered regions span residues 630–707 (REQQ…SGIG) and 722–747 (AASMNDISRTQQSRQSPQELMWKNKA). Residues 642 to 673 (PTIQQSQTQLQPLQQQPQQVQQQYQGQQLQQP) are compositionally biased toward low complexity. 2 stretches are compositionally biased toward polar residues: residues 674–707 (FYSSLYPTPGASHNTQYPSLPVGQNSQFPMSGIG) and 726–739 (NDISRTQQSRQSPQ).

As to quaternary structure, interacts (via C-terminus) with SWI3B and (via WW domain) with FY (via PPLPP motifs). In terms of tissue distribution, constitutively expressed, but the negative feedback maintains the active isoform a low level throughout much of the plant, except in meristematic cells at a specific time in development.

It localises to the nucleus. Functionally, plays a major role in the promotion of the transition of the vegetative meristem to reproductive development. Plays a role in the regulation of flowering time in the autonomous flowering pathway by decreasing FLOWERING LOCUS C mRNA levels. Required for RNA-mediated chromatin silencing of a range of loci in the genome. Cotranscriptionally recognizes aberrant RNA and marks it for silencing. Controls alternative cleavage and polyadenylation on pre-mRNAs and antisense RNAs. Acts redundantly with FPA to prevent the expression of distally polyadenylated antisense RNAs at the FLC locus. This chain is Flowering time control protein FCA (FCA), found in Arabidopsis thaliana (Mouse-ear cress).